Consider the following 65-residue polypeptide: Ferredoxin-1 (65 aa).

Positions 2–30 (AMKIDPELCTSCGDCEPVCPTNAIAPKKG) constitute a 4Fe-4S ferredoxin-type domain. [4Fe-4S] cluster-binding residues include Cys-10, Cys-13, Cys-16, Cys-20, Cys-39, Cys-42, Cys-51, and Cys-55.

[4Fe-4S] cluster serves as cofactor.

In terms of biological role, ferredoxins are iron-sulfur proteins that transfer electrons in a wide variety of metabolic reactions. This ferredoxin probably participates in nitrogen fixation. The protein is Ferredoxin-1 (fdxN) of Rhodobacter capsulatus (Rhodopseudomonas capsulata).